The chain runs to 71 residues: Long neurotoxin 1 (71 aa).

5 disulfide bridges follow: Cys3-Cys20, Cys14-Cys41, Cys26-Cys30, Cys45-Cys56, and Cys57-Cys62.

The protein belongs to the three-finger toxin family. Long-chain subfamily. Type II alpha-neurotoxin sub-subfamily. Expressed by the venom gland.

Its subcellular location is the secreted. Functionally, binds with high affinity to muscular (alpha-1/CHRNA1) and neuronal (alpha-7/CHRNA7) nicotinic acetylcholine receptor (nAChR) and hinders acetylcholine binding to the receptor, thereby impairing neuromuscular and neuronal transmission. This is Long neurotoxin 1 from Naja annulata annulata (Banded water cobra).